Here is a 219-residue protein sequence, read N- to C-terminus: Thiamine-phosphate synthase (219 aa).

4-amino-2-methyl-5-(diphosphooxymethyl)pyrimidine is bound by residues glutamine 44–lysine 48 and asparagine 79. The Mg(2+) site is built by aspartate 80 and aspartate 99. 4-amino-2-methyl-5-(diphosphooxymethyl)pyrimidine is bound at residue serine 117. Position 143 to 145 (threonine 143 to threonine 145) interacts with 2-[(2R,5Z)-2-carboxy-4-methylthiazol-5(2H)-ylidene]ethyl phosphate. Position 146 (lysine 146) interacts with 4-amino-2-methyl-5-(diphosphooxymethyl)pyrimidine. 2-[(2R,5Z)-2-carboxy-4-methylthiazol-5(2H)-ylidene]ethyl phosphate contacts are provided by residues glycine 175 and isoleucine 195–serine 196.

The protein belongs to the thiamine-phosphate synthase family. It depends on Mg(2+) as a cofactor.

It carries out the reaction 2-[(2R,5Z)-2-carboxy-4-methylthiazol-5(2H)-ylidene]ethyl phosphate + 4-amino-2-methyl-5-(diphosphooxymethyl)pyrimidine + 2 H(+) = thiamine phosphate + CO2 + diphosphate. The enzyme catalyses 2-(2-carboxy-4-methylthiazol-5-yl)ethyl phosphate + 4-amino-2-methyl-5-(diphosphooxymethyl)pyrimidine + 2 H(+) = thiamine phosphate + CO2 + diphosphate. The catalysed reaction is 4-methyl-5-(2-phosphooxyethyl)-thiazole + 4-amino-2-methyl-5-(diphosphooxymethyl)pyrimidine + H(+) = thiamine phosphate + diphosphate. The protein operates within cofactor biosynthesis; thiamine diphosphate biosynthesis; thiamine phosphate from 4-amino-2-methyl-5-diphosphomethylpyrimidine and 4-methyl-5-(2-phosphoethyl)-thiazole: step 1/1. In terms of biological role, condenses 4-methyl-5-(beta-hydroxyethyl)thiazole monophosphate (THZ-P) and 2-methyl-4-amino-5-hydroxymethyl pyrimidine pyrophosphate (HMP-PP) to form thiamine monophosphate (TMP). The polypeptide is Thiamine-phosphate synthase (Bacillus cereus (strain 03BB102)).